A 103-amino-acid chain; its full sequence is G0/G1 switch protein 2 (103 aa).

A disordered region spans residues 80–103 (LQEKGKQQDTVLGGRALSNRQHAS).

Directly interacts with BCL2; this interaction prevents the formation of the anti-apoptotic BAX-BCL2 complex. In terms of tissue distribution, widely expressed with highest levels in peripheral blood, skeletal muscle and heart, followed by kidney and liver.

It is found in the mitochondrion. Promotes apoptosis by binding to BCL2, hence preventing the formation of protective BCL2-BAX heterodimers. The protein is G0/G1 switch protein 2 (G0S2) of Homo sapiens (Human).